The primary structure comprises 382 residues: Chaperone protein DnaJ (382 aa).

The J domain occupies 5-69; that stretch reads DYYEILGVSK…EKRARYDRFG (65 aa). Residues 137 to 219 form a CR-type zinc finger; the sequence is GKETEIEIPR…CGGTGRVKRR (83 aa). Cys-150, Cys-153, Cys-167, Cys-170, Cys-193, Cys-196, Cys-207, and Cys-210 together coordinate Zn(2+). CXXCXGXG motif repeat units lie at residues 150–157, 167–174, 193–200, and 207–214; these read CDTCQGSG, CPHCHGSG, CPVCGGTG, and CPTCGGTG. The segment at 154–175 is disordered; sequence QGSGAKPGTSPTSCPHCHGSGQ.

It belongs to the DnaJ family. Homodimer. Requires Zn(2+) as cofactor.

The protein localises to the cytoplasm. In terms of biological role, participates actively in the response to hyperosmotic and heat shock by preventing the aggregation of stress-denatured proteins and by disaggregating proteins, also in an autonomous, DnaK-independent fashion. Unfolded proteins bind initially to DnaJ; upon interaction with the DnaJ-bound protein, DnaK hydrolyzes its bound ATP, resulting in the formation of a stable complex. GrpE releases ADP from DnaK; ATP binding to DnaK triggers the release of the substrate protein, thus completing the reaction cycle. Several rounds of ATP-dependent interactions between DnaJ, DnaK and GrpE are required for fully efficient folding. Also involved, together with DnaK and GrpE, in the DNA replication of plasmids through activation of initiation proteins. This chain is Chaperone protein DnaJ, found in Geobacillus kaustophilus (strain HTA426).